The sequence spans 158 residues: Mitotic-spindle organizing protein 2 (158 aa).

Ser34 is subject to Phosphoserine. The tract at residues 81–158 is disordered; that stretch reads AGQRVASDSQ…PGRSPPRSGT (78 aa). The span at 110 to 119 shows a compositional bias: gly residues; it reads KGGGALGGGP. Ser152 is subject to Phosphoserine.

Belongs to the MOZART2 family. Associates with the gamma-tubulin ring complex (gTuRC) consisting of TUBGCP2, TUBGCP3, TUBGCP4, TUBGCP5 and TUBGCP6 and gamma-tubulin TUBG1 or TUBG2; within the complex, interacts with TUBGCP2; the interaction plays a role in gTuRC activation.

The protein resides in the cytoplasm. It localises to the cytoskeleton. Its subcellular location is the microtubule organizing center. It is found in the centrosome. The protein localises to the spindle. Functionally, required for the recruitment and the assembly of the gamma-tubulin ring complex (gTuRC) at the centrosome. The gTuRC regulates the minus-end nucleation of alpha-beta tubulin heterodimers that grow into microtubule protafilaments, a critical step in centrosome duplication and spindle formation. This chain is Mitotic-spindle organizing protein 2 (MZT2), found in Bos taurus (Bovine).